Consider the following 513-residue polypeptide: Sterol 14-alpha demethylase (513 aa).

Residues 10–30 form a helical membrane-spanning segment; it reads FTLVSAYAAAGLLAIIVLNLL. N-linked (GlcNAc...) asparagine glycosylation is found at Asn37 and Asn406. Cys453 is a binding site for heme.

It belongs to the cytochrome P450 family. Requires heme as cofactor.

Its subcellular location is the endoplasmic reticulum membrane. The enzyme catalyses a 14alpha-methyl steroid + 3 reduced [NADPH--hemoprotein reductase] + 3 O2 = a Delta(14) steroid + formate + 3 oxidized [NADPH--hemoprotein reductase] + 4 H2O + 4 H(+). It carries out the reaction a 14alpha-methyl steroid + reduced [NADPH--hemoprotein reductase] + O2 = a 14alpha-hydroxymethyl steroid + oxidized [NADPH--hemoprotein reductase] + H2O + H(+). The catalysed reaction is a 14alpha-hydroxymethyl steroid + reduced [NADPH--hemoprotein reductase] + O2 = a 14alpha-formyl steroid + oxidized [NADPH--hemoprotein reductase] + 2 H2O + H(+). It catalyses the reaction a 14alpha-formyl steroid + reduced [NADPH--hemoprotein reductase] + O2 = a Delta(14) steroid + formate + oxidized [NADPH--hemoprotein reductase] + H2O + 2 H(+). The enzyme catalyses lanosterol + 3 reduced [NADPH--hemoprotein reductase] + 3 O2 = 4,4-dimethyl-5alpha-cholesta-8,14,24-trien-3beta-ol + formate + 3 oxidized [NADPH--hemoprotein reductase] + 4 H2O + 4 H(+). It carries out the reaction lanosterol + reduced [NADPH--hemoprotein reductase] + O2 = 32-hydroxylanosterol + oxidized [NADPH--hemoprotein reductase] + H2O + H(+). The catalysed reaction is 32-hydroxylanosterol + reduced [NADPH--hemoprotein reductase] + O2 = 32-oxolanosterol + oxidized [NADPH--hemoprotein reductase] + 2 H2O + H(+). It catalyses the reaction 32-oxolanosterol + reduced [NADPH--hemoprotein reductase] + O2 = 4,4-dimethyl-5alpha-cholesta-8,14,24-trien-3beta-ol + formate + oxidized [NADPH--hemoprotein reductase] + H2O + 2 H(+). The enzyme catalyses eburicol + 3 reduced [NADPH--hemoprotein reductase] + 3 O2 = 14-demethyleburicol + formate + 3 oxidized [NADPH--hemoprotein reductase] + 4 H2O + 4 H(+). It carries out the reaction eburicol + reduced [NADPH--hemoprotein reductase] + O2 = 32-hydroxyeburicol + oxidized [NADPH--hemoprotein reductase] + H2O + H(+). The catalysed reaction is 32-hydroxyeburicol + reduced [NADPH--hemoprotein reductase] + O2 = 32-oxoeburicol + oxidized [NADPH--hemoprotein reductase] + 2 H2O + H(+). It catalyses the reaction 32-oxoeburicol + reduced [NADPH--hemoprotein reductase] + O2 = 14-demethyleburicol + formate + oxidized [NADPH--hemoprotein reductase] + H2O + 2 H(+). It functions in the pathway steroid biosynthesis; sterol biosynthesis. In terms of biological role, sterol 14alpha-demethylase, encoded by cyp51A, cyp51B and cyp51C, that plays a critical role in the third module of ergosterol biosynthesis pathway, being ergosterol the major sterol component in fungal membranes that participates in a variety of functions. The third module or late pathway involves the ergosterol synthesis itself through consecutive reactions that mainly occur in the endoplasmic reticulum (ER) membrane. In filamentous fungi, during the initial step of this module, lanosterol (lanosta-8,24-dien-3beta-ol) can be metabolized to eburicol. Sterol 14alpha-demethylase catalyzes the three-step oxidative removal of the 14alpha-methyl group (C-32) of both these sterols in the form of formate, and converts eburicol and lanosterol to 14-demethyleburicol (4,4,24-trimethylergosta-8,14,24(28)-trienol) and 4,4-dimethyl-5alpha-cholesta-8,14,24-trien-3beta-ol, respectively, which are further metabolized by other enzymes in the pathway to ergosterol. Can also use substrates not intrinsic to fungi, such as 24,25-dihydrolanosterol (DHL), producing 4,4'-dimethyl-8,14-cholestadien-3-beta-ol, but at lower rates than the endogenous substrates. As a target of azole drugs, plays a crucial role in azole susceptibility. This is Sterol 14-alpha demethylase from Aspergillus flavus (strain ATCC 200026 / FGSC A1120 / IAM 13836 / NRRL 3357 / JCM 12722 / SRRC 167).